The following is a 335-amino-acid chain: Cobalt-precorrin-5B C(1)-methyltransferase (335 aa).

Belongs to the CbiD family.

It catalyses the reaction Co-precorrin-5B + S-adenosyl-L-methionine = Co-precorrin-6A + S-adenosyl-L-homocysteine. It functions in the pathway cofactor biosynthesis; adenosylcobalamin biosynthesis; cob(II)yrinate a,c-diamide from sirohydrochlorin (anaerobic route): step 6/10. Its function is as follows. Catalyzes the methylation of C-1 in cobalt-precorrin-5B to form cobalt-precorrin-6A. The chain is Cobalt-precorrin-5B C(1)-methyltransferase from Methanospirillum hungatei JF-1 (strain ATCC 27890 / DSM 864 / NBRC 100397 / JF-1).